The sequence spans 315 residues: Cysteine proteinase 1 (315 aa).

The signal sequence occupies residues 1-13 (MFTFILMFYIGYG). A propeptide spans 14-93 (IDFNTWVANN…KGEVRYLNIQ (80 aa)) (activation peptide). Cystine bridges form between cysteine 115–cysteine 161 and cysteine 152–cysteine 193. Residue cysteine 118 is part of the active site. Residues histidine 259 and asparagine 279 contribute to the active site.

It belongs to the peptidase C1 family.

Its subcellular location is the lysosome. Its activity is regulated as follows. Inhibited by cysteine protease inhibitors ICP1 and ICP2. In terms of biological role, cysteine protease which degrades matrix proteins such as collagen, laminin and fibronectin and thus is involved in the destruction of human tissue. Can abolish adhesion. May play an important role in pathogenicity. This Entamoeba histolytica (strain ATCC 30459 / HM-1:IMSS / ABRM) protein is Cysteine proteinase 1.